Here is a 353-residue protein sequence, read N- to C-terminus: Phosphate acyltransferase (353 aa).

Belongs to the PlsX family. As to quaternary structure, homodimer. Probably interacts with PlsY.

It localises to the cytoplasm. The catalysed reaction is a fatty acyl-[ACP] + phosphate = an acyl phosphate + holo-[ACP]. It participates in lipid metabolism; phospholipid metabolism. In terms of biological role, catalyzes the reversible formation of acyl-phosphate (acyl-PO(4)) from acyl-[acyl-carrier-protein] (acyl-ACP). This enzyme utilizes acyl-ACP as fatty acyl donor, but not acyl-CoA. The sequence is that of Phosphate acyltransferase from Nitrosospira multiformis (strain ATCC 25196 / NCIMB 11849 / C 71).